The chain runs to 341 residues: N-acetyl-gamma-glutamyl-phosphate reductase (341 aa).

The active site involves C147.

This sequence belongs to the NAGSA dehydrogenase family. Type 1 subfamily.

It is found in the cytoplasm. The enzyme catalyses N-acetyl-L-glutamate 5-semialdehyde + phosphate + NADP(+) = N-acetyl-L-glutamyl 5-phosphate + NADPH + H(+). Its pathway is amino-acid biosynthesis; L-arginine biosynthesis; N(2)-acetyl-L-ornithine from L-glutamate: step 3/4. Functionally, catalyzes the NADPH-dependent reduction of N-acetyl-5-glutamyl phosphate to yield N-acetyl-L-glutamate 5-semialdehyde. This chain is N-acetyl-gamma-glutamyl-phosphate reductase, found in Dehalococcoides mccartyi (strain ATCC BAA-2100 / JCM 16839 / KCTC 5957 / BAV1).